Here is a 426-residue protein sequence, read N- to C-terminus: Cephalotocin receptor 2 (426 aa).

At 1–51 (MYQAMEVESTSPSGFFLDFYTQSTIPTTDFLNNTNSSHPIRDEKLVKIEIA) the chain is on the extracellular side. N-linked (GlcNAc...) asparagine glycans are attached at residues Asn32 and Asn35. The chain crosses the membrane as a helical span at residues 52–72 (VLGTCFTLAIINNLCVLLVLL). The Cytoplasmic portion of the chain corresponds to 73 to 84 (WRRKKVRRMQMF). A helical membrane pass occupies residues 85 to 105 (ILHLSIADLIVAFFNILPQLI). Topologically, residues 106-120 (WDITFRFMAGDAMCR) are extracellular. Residues Cys119 and Cys198 are joined by a disulfide bond. The helical transmembrane segment at 121–141 (FIKYAQMFSLYLSTYILIMTA) threads the bilayer. The Cytoplasmic portion of the chain corresponds to 142 to 165 (VDRYRAICHPLSNQTWTPCMVYCK). A helical transmembrane segment spans residues 166-186 (IFIAYAIATIFSIPQAILFQM). Residues 187–208 (QEVNEGSGIYDCWVHFEPAWVL) are Extracellular-facing. Residues 209–229 (TAYALYIFFALYLIPILILFF) form a helical membrane-spanning segment. The Cytoplasmic portion of the chain corresponds to 230–288 (TYGSICYTIWAKYRHAIKTKKDANTRYPQRRKKKGVILRTHSVHGFSKAKLNSVKLTFA). The helical transmembrane segment at 289–309 (VIVTYIICWSPFFVSQIWWLF) threads the bilayer. Topologically, residues 310-319 (DETVVGNAGV) are extracellular. Residues 320–340 (VVILLMACLNSCTNPWIYLIF) form a helical membrane-spanning segment. Topologically, residues 341-426 (NRNYISNVLP…DQFIYSDKTT (86 aa)) are cytoplasmic. Residues 373–426 (GSVRRDSRKTSDPKRISESRRISDARRISGKTQKNNSSSPRKTSDQFIYSDKTT) form a disordered region. Residues 375-399 (VRRDSRKTSDPKRISESRRISDARR) show a composition bias toward basic and acidic residues. Residues 402–426 (GKTQKNNSSSPRKTSDQFIYSDKTT) show a composition bias toward polar residues.

This sequence belongs to the G-protein coupled receptor 1 family. Vasopressin/oxytocin receptor subfamily. In terms of tissue distribution, present in various peripheral tissues with highest expression in branchia and vas deferens. Very low expression detected in nervous system.

It is found in the cell membrane. Functionally, acts as a receptor for cephalotocin. The polypeptide is Cephalotocin receptor 2 (Octopus vulgaris (Common octopus)).